A 75-amino-acid chain; its full sequence is uncharacterized protein (75 aa).

This is an uncharacterized protein from Mycobacterium tuberculosis (strain CDC 1551 / Oshkosh).